Reading from the N-terminus, the 214-residue chain is Heat shock protein 30 (214 aa).

In terms of domain architecture, sHSP spans 66–183 (VPSSLTIQPV…AERVVPINCS (118 aa)). Residues 193-214 (SKTEGSITDTQKKQENTISKED) form a disordered region. The span at 202–214 (TQKKQENTISKED) shows a compositional bias: basic and acidic residues.

Belongs to the small heat shock protein (HSP20) family.

The polypeptide is Heat shock protein 30 (hsp30) (Oncorhynchus tshawytscha (Chinook salmon)).